A 197-amino-acid chain; its full sequence is Beta-crystallin A2 (197 aa).

The N-terminal arm stretch occupies residues Met-1–Pro-11. Beta/gamma crystallin 'Greek key' domains follow at residues Ala-12–Asn-52 and Gly-53–Leu-99. The connecting peptide stretch occupies residues Cys-100 to Asp-105. Beta/gamma crystallin 'Greek key' domains lie at Ser-106 to Ser-147 and Gly-148 to Gln-196.

This sequence belongs to the beta/gamma-crystallin family. In terms of assembly, homo/heterodimer, or complexes of higher-order. The structure of beta-crystallin oligomers seems to be stabilized through interactions between the N-terminal arms.

In terms of biological role, crystallins are the dominant structural components of the vertebrate eye lens. The chain is Beta-crystallin A2 (CRYBA2) from Bos taurus (Bovine).